The primary structure comprises 120 residues: Large ribosomal subunit protein uL22 (120 aa).

Residues 1-20 are disordered; it reads MFVNRRYTARGKNLPSSPKK.

This sequence belongs to the universal ribosomal protein uL22 family. As to quaternary structure, part of the 50S ribosomal subunit.

Functionally, this protein binds specifically to 23S rRNA; its binding is stimulated by other ribosomal proteins, e.g. L4, L17, and L20. It is important during the early stages of 50S assembly. It makes multiple contacts with different domains of the 23S rRNA in the assembled 50S subunit and ribosome. In terms of biological role, the globular domain of the protein is located near the polypeptide exit tunnel on the outside of the subunit, while an extended beta-hairpin is found that lines the wall of the exit tunnel in the center of the 70S ribosome. In Borrelia hermsii (strain HS1 / DAH), this protein is Large ribosomal subunit protein uL22.